We begin with the raw amino-acid sequence, 230 residues long: Phosphoribosylaminoimidazole-succinocarboxamide synthase (230 aa).

The protein belongs to the SAICAR synthetase family.

It carries out the reaction 5-amino-1-(5-phospho-D-ribosyl)imidazole-4-carboxylate + L-aspartate + ATP = (2S)-2-[5-amino-1-(5-phospho-beta-D-ribosyl)imidazole-4-carboxamido]succinate + ADP + phosphate + 2 H(+). Its pathway is purine metabolism; IMP biosynthesis via de novo pathway; 5-amino-1-(5-phospho-D-ribosyl)imidazole-4-carboxamide from 5-amino-1-(5-phospho-D-ribosyl)imidazole-4-carboxylate: step 1/2. The sequence is that of Phosphoribosylaminoimidazole-succinocarboxamide synthase from Thermotoga sp. (strain RQ2).